A 302-amino-acid chain; its full sequence is GTP cyclohydrolase FolE2 (302 aa).

The segment at 1-27 (MPKKQLPPKEERHKLFGSVPPKERTKP) is disordered.

This sequence belongs to the GTP cyclohydrolase IV family.

It carries out the reaction GTP + H2O = 7,8-dihydroneopterin 3'-triphosphate + formate + H(+). It participates in cofactor biosynthesis; 7,8-dihydroneopterin triphosphate biosynthesis; 7,8-dihydroneopterin triphosphate from GTP: step 1/1. In terms of biological role, converts GTP to 7,8-dihydroneopterin triphosphate. In Oceanobacillus iheyensis (strain DSM 14371 / CIP 107618 / JCM 11309 / KCTC 3954 / HTE831), this protein is GTP cyclohydrolase FolE2.